A 324-amino-acid chain; its full sequence is Glyoxylate/hydroxypyruvate reductase B (324 aa).

Catalysis depends on residues arginine 237 and glutamate 266. Histidine 285 acts as the Proton donor in catalysis.

This sequence belongs to the D-isomer specific 2-hydroxyacid dehydrogenase family. GhrB subfamily. In terms of assembly, homodimer.

It is found in the cytoplasm. The catalysed reaction is glycolate + NADP(+) = glyoxylate + NADPH + H(+). It carries out the reaction (R)-glycerate + NAD(+) = 3-hydroxypyruvate + NADH + H(+). The enzyme catalyses (R)-glycerate + NADP(+) = 3-hydroxypyruvate + NADPH + H(+). Functionally, catalyzes the NADPH-dependent reduction of glyoxylate and hydroxypyruvate into glycolate and glycerate, respectively. The chain is Glyoxylate/hydroxypyruvate reductase B from Salmonella gallinarum (strain 287/91 / NCTC 13346).